The chain runs to 162 residues: NADH-quinone oxidoreductase subunit I (162 aa).

4Fe-4S ferredoxin-type domains lie at 52-82 (LRRY…IEAG) and 93-122 (VRYD…EGPN). Residues Cys62, Cys65, Cys68, Cys72, Cys102, Cys105, Cys108, and Cys112 each coordinate [4Fe-4S] cluster.

Belongs to the complex I 23 kDa subunit family. NDH-1 is composed of 14 different subunits. Subunits NuoA, H, J, K, L, M, N constitute the membrane sector of the complex. [4Fe-4S] cluster is required as a cofactor.

It is found in the cell inner membrane. The enzyme catalyses a quinone + NADH + 5 H(+)(in) = a quinol + NAD(+) + 4 H(+)(out). Functionally, NDH-1 shuttles electrons from NADH, via FMN and iron-sulfur (Fe-S) centers, to quinones in the respiratory chain. The immediate electron acceptor for the enzyme in this species is believed to be ubiquinone. Couples the redox reaction to proton translocation (for every two electrons transferred, four hydrogen ions are translocated across the cytoplasmic membrane), and thus conserves the redox energy in a proton gradient. This chain is NADH-quinone oxidoreductase subunit I, found in Nitrobacter hamburgensis (strain DSM 10229 / NCIMB 13809 / X14).